A 414-amino-acid polypeptide reads, in one-letter code: Lysosome-associated membrane glycoprotein 1 (414 aa).

A signal peptide spans 1–18 (MGGAARAVLLGFLQASSS). Residues 19 to 181 (FDVRDSTGKV…SANKTECRED (163 aa)) form a first lumenal domain region. At 19-379 (FDVRDSTGKV…EECQLDENNM (361 aa)) the chain is on the lumenal side. Cysteine 29 and cysteine 67 are joined by a disulfide. Asparagine 33, asparagine 58, asparagine 71, asparagine 90, asparagine 108, asparagine 117, asparagine 154, asparagine 159, asparagine 168, and asparagine 174 each carry an N-linked (GlcNAc...) asparagine glycan. An intrachain disulfide couples cysteine 142 to cysteine 178. Positions 182–224 (MVSTTTVAPTTPKHATSQVPTTSPAPTAAPSSPAVGKYNVTGA) are hinge. Residues 186–213 (TTVAPTTPKHATSQVPTTSPAPTAAPSS) form a disordered region. The segment covering 196-213 (ATSQVPTTSPAPTAAPSS) has biased composition (low complexity). Residues asparagine 220, asparagine 225, asparagine 238, asparagine 259, asparagine 289, asparagine 301, and asparagine 319 are each glycosylated (N-linked (GlcNAc...) asparagine). Residues 225–379 (NGTCVLASMG…EECQLDENNM (155 aa)) are second lumenal domain. An intrachain disulfide couples cysteine 228 to cysteine 266. Cysteine 335 and cysteine 372 form a disulfide bridge. Residues 380 to 403 (LIPIIVGAALAGLVLIVLIAYLIG) traverse the membrane as a helical segment. At 404-414 (RKRSHAGYQTI) the chain is on the cytoplasmic side.

It belongs to the LAMP family.

The protein resides in the lysosome membrane. It localises to the endosome membrane. The protein localises to the late endosome membrane. It is found in the cell membrane. Its subcellular location is the cytolytic granule membrane. In terms of biological role, lysosomal membrane glycoprotein which plays an important role in lysosome biogenesis, lysosomal pH regulation, autophagy and cholesterol homeostasis. Functionally, (Microbial infection) Plays an essential role in efficient replication and spread of Marek's disease virus, by facilitating viral cell-to-cell spread. This Gallus gallus (Chicken) protein is Lysosome-associated membrane glycoprotein 1 (LAMP1).